Consider the following 556-residue polypeptide: WD repeat-containing protein srw1 (556 aa).

Positions 1–80 are disordered; sequence MDEFDGFTRP…NEGDRFIPSR (80 aa). Residues 12-37 are compositionally biased toward low complexity; it reads SSNSSANRNSNNSMNRVENNNSNSDS. Basic and acidic residues predominate over residues 43–55; that stretch reads SRGDAHTRMRQGF. The residue at position 62 (serine 62) is a Phosphoserine. The span at 69-78 shows a compositional bias: basic and acidic residues; it reads RTNEGDRFIP. Position 98 is a phosphothreonine (threonine 98). Polar residues predominate over residues 126–146; it reads TFNNSPIATPNTTIGVSTPRT. The segment at 126 to 173 is disordered; the sequence is TFNNSPIATPNTTIGVSTPRTDSGIDDIELTQRTPPSSSHTSSSILQN. Positions 159 to 169 are enriched in low complexity; that stretch reads TPPSSSHTSSS. A Phosphothreonine modification is found at threonine 177. Serine 187 and serine 214 each carry phosphoserine. 7 WD repeats span residues 246-285, 289-328, 331-368, 372-411, 414-456, 458-499, and 502-541; these read GLAG…VTVM, YPTD…KTRT, GHTE…HYFR, AHRQ…PLYS, NHIA…MLHN, DTGS…RVGT, and GHTD…SKHS.

This sequence belongs to the WD repeat CDC20/Fizzy family. Phosphorylated by cdc2-cdc13-CDK complex. This targets srw1 for proteolysis which in turn promotes cdc13 turnover. Dephosphorylated during G1 arrest.

Its subcellular location is the nucleus. In terms of biological role, has a role in cell differentiation and cell cycling by negatively regulating cig2 and cdc12-associated cdc2. Down-regulates the level of cdc13, particularly in a nitrogen deprived environment. Regulator of cell cycle G1 phase progression. Prevents onset of mitosis during the pre-Start G1 period. Required for degradation of cdc13 mitotic cyclin B during G1 arrest but not during mitotic exit. The protein is WD repeat-containing protein srw1 (srw1) of Schizosaccharomyces pombe (strain 972 / ATCC 24843) (Fission yeast).